A 61-amino-acid polypeptide reads, in one-letter code: Large ribosomal subunit protein uL30 (61 aa).

This sequence belongs to the universal ribosomal protein uL30 family. Part of the 50S ribosomal subunit.

The polypeptide is Large ribosomal subunit protein uL30 (Corynebacterium glutamicum (strain ATCC 13032 / DSM 20300 / JCM 1318 / BCRC 11384 / CCUG 27702 / LMG 3730 / NBRC 12168 / NCIMB 10025 / NRRL B-2784 / 534)).